The following is a 238-amino-acid chain: Probable transcriptional regulatory protein TC_0742 (238 aa).

Positions 1-21 (MAGHSKWANTKHRKERADHKK) are disordered. Basic residues predominate over residues 9–21 (NTKHRKERADHKK).

Belongs to the TACO1 family.

It is found in the cytoplasm. The chain is Probable transcriptional regulatory protein TC_0742 from Chlamydia muridarum (strain MoPn / Nigg).